We begin with the raw amino-acid sequence, 611 residues long: Elongation factor 1 alpha-like protein (611 aa).

Disordered regions lie at residues 1-21 (MAYS…DEGE) and 105-138 (SISQ…DEKT). Serine 124 is subject to Phosphoserine. The segment covering 126–138 (GERNGEEANDEKT) has biased composition (basic and acidic residues). A tr-type G domain is found at 165–390 (LPHLSFVVLG…LENAAFKISK (226 aa)). Positions 174–181 (GHVDAGKS) are G1. 174–181 (GHVDAGKS) provides a ligand contact to GTP. The segment at 230–234 (GVTVS) is G2. Residues 251-254 (DAPG) are G3. GTP is bound by residues 313-316 (NKMD) and 352-354 (SGF). The segment at 313 to 316 (NKMD) is G4. Residues 352–354 (SGF) are G5.

It belongs to the TRAFAC class translation factor GTPase superfamily. Classic translation factor GTPase family. As to quaternary structure, component of the Dom34-Hbs1 complex, also named Pelota-HBS1L complex, composed of DOM34 and HBS1.

The protein localises to the cytoplasm. It catalyses the reaction GTP + H2O = GDP + phosphate + H(+). In terms of biological role, GTPase component of the Dom34-Hbs1 complex, a complex that recognizes stalled ribosomes and triggers the No-Go Decay (NGD) pathway. The Dom34-Hbs1 complex recognizes ribosomes stalled at the 3' end of an mRNA and engages stalled ribosomes by destabilizing mRNA in the mRNA channel. Following ribosome-binding, the Pelota-HBS1L complex promotes the disassembly of stalled ribosomes, followed by degradation of damaged mRNAs as part of the NGD pathway. The Dom34-Hbs1 complex is also involved in non-functional rRNA decay. The protein is Elongation factor 1 alpha-like protein of Saccharomyces cerevisiae (strain ATCC 204508 / S288c) (Baker's yeast).